The sequence spans 658 residues: UvrABC system protein B (658 aa).

Residues 26–413 (EGINSGKKKQ…SPEVIEQIIR (388 aa)) enclose the Helicase ATP-binding domain. Position 39-46 (39-46 (GATGTGKT)) interacts with ATP. The short motif at 92–115 (YYDYYQPEAYVPQTDTFIEKDAQI) is the Beta-hairpin element. The Helicase C-terminal domain occupies 430–596 (QIDDLLGEIQ…TIQKGVRDVI (167 aa)). The UVR domain maps to 622-657 (EKTIAKMEAEMKEAAKALDFERAAELRDLLLELKAE).

The protein belongs to the UvrB family. In terms of assembly, forms a heterotetramer with UvrA during the search for lesions. Interacts with UvrC in an incision complex.

It localises to the cytoplasm. Functionally, the UvrABC repair system catalyzes the recognition and processing of DNA lesions. A damage recognition complex composed of 2 UvrA and 2 UvrB subunits scans DNA for abnormalities. Upon binding of the UvrA(2)B(2) complex to a putative damaged site, the DNA wraps around one UvrB monomer. DNA wrap is dependent on ATP binding by UvrB and probably causes local melting of the DNA helix, facilitating insertion of UvrB beta-hairpin between the DNA strands. Then UvrB probes one DNA strand for the presence of a lesion. If a lesion is found the UvrA subunits dissociate and the UvrB-DNA preincision complex is formed. This complex is subsequently bound by UvrC and the second UvrB is released. If no lesion is found, the DNA wraps around the other UvrB subunit that will check the other stand for damage. This Bacillus cereus (strain ZK / E33L) protein is UvrABC system protein B.